We begin with the raw amino-acid sequence, 196 residues long: Probable phosphoheptose isomerase (196 aa).

In terms of domain architecture, SIS spans 43–196; that stretch reads IVNVFNSGGK…MICSVIDSYY (154 aa). 58–60 contacts substrate; sequence NGG. 2 residues coordinate Zn(2+): His-67 and Glu-71. Residues Glu-71, 100–101, 126–128, Ser-131, and Gln-178 contribute to the substrate site; these read ND and STS. Zn(2+) contacts are provided by Gln-178 and His-186.

It belongs to the SIS family. GmhA subfamily. It depends on Zn(2+) as a cofactor.

Its subcellular location is the cytoplasm. The enzyme catalyses 2 D-sedoheptulose 7-phosphate = D-glycero-alpha-D-manno-heptose 7-phosphate + D-glycero-beta-D-manno-heptose 7-phosphate. The protein operates within carbohydrate biosynthesis; D-glycero-D-manno-heptose 7-phosphate biosynthesis; D-glycero-alpha-D-manno-heptose 7-phosphate and D-glycero-beta-D-manno-heptose 7-phosphate from sedoheptulose 7-phosphate: step 1/1. Functionally, catalyzes the isomerization of sedoheptulose 7-phosphate in D-glycero-D-manno-heptose 7-phosphate. In Thermoplasma volcanium (strain ATCC 51530 / DSM 4299 / JCM 9571 / NBRC 15438 / GSS1), this protein is Probable phosphoheptose isomerase.